We begin with the raw amino-acid sequence, 461 residues long: V-type ATP synthase beta chain (461 aa).

This sequence belongs to the ATPase alpha/beta chains family.

Its function is as follows. Produces ATP from ADP in the presence of a proton gradient across the membrane. The V-type beta chain is a regulatory subunit. In Clostridium botulinum (strain ATCC 19397 / Type A), this protein is V-type ATP synthase beta chain.